The following is a 508-amino-acid chain: Photosystem II CP47 reaction center protein (508 aa).

A run of 6 helical transmembrane segments spans residues 21–36 (AVHI…WAGS), 101–115 (IVFS…IWHW), 140–156 (GIHL…FGAF), 203–218 (IAAG…FHLS), 237–252 (VLSS…AFVV), and 457–472 (SFAL…HGAR).

The protein belongs to the PsbB/PsbC family. PsbB subfamily. In terms of assembly, PSII is composed of 1 copy each of membrane proteins PsbA, PsbB, PsbC, PsbD, PsbE, PsbF, PsbH, PsbI, PsbJ, PsbK, PsbL, PsbM, PsbT, PsbX, PsbY, PsbZ, Psb30/Ycf12, at least 3 peripheral proteins of the oxygen-evolving complex and a large number of cofactors. It forms dimeric complexes. The cofactor is Binds multiple chlorophylls. PSII binds additional chlorophylls, carotenoids and specific lipids..

The protein resides in the plastid. It localises to the chloroplast thylakoid membrane. Its function is as follows. One of the components of the core complex of photosystem II (PSII). It binds chlorophyll and helps catalyze the primary light-induced photochemical processes of PSII. PSII is a light-driven water:plastoquinone oxidoreductase, using light energy to abstract electrons from H(2)O, generating O(2) and a proton gradient subsequently used for ATP formation. The polypeptide is Photosystem II CP47 reaction center protein (Buxus microphylla (Littleleaf boxwood)).